The chain runs to 415 residues: Gamma-glutamyl phosphate reductase (415 aa).

The protein belongs to the gamma-glutamyl phosphate reductase family.

It localises to the cytoplasm. It catalyses the reaction L-glutamate 5-semialdehyde + phosphate + NADP(+) = L-glutamyl 5-phosphate + NADPH + H(+). It functions in the pathway amino-acid biosynthesis; L-proline biosynthesis; L-glutamate 5-semialdehyde from L-glutamate: step 2/2. Its function is as follows. Catalyzes the NADPH-dependent reduction of L-glutamate 5-phosphate into L-glutamate 5-semialdehyde and phosphate. The product spontaneously undergoes cyclization to form 1-pyrroline-5-carboxylate. The chain is Gamma-glutamyl phosphate reductase from Listeria welshimeri serovar 6b (strain ATCC 35897 / DSM 20650 / CCUG 15529 / CIP 8149 / NCTC 11857 / SLCC 5334 / V8).